Consider the following 130-residue polypeptide: Small ribosomal subunit protein uS8 (130 aa).

Belongs to the universal ribosomal protein uS8 family. As to quaternary structure, part of the 30S ribosomal subunit. Contacts proteins S5 and S12.

In terms of biological role, one of the primary rRNA binding proteins, it binds directly to 16S rRNA central domain where it helps coordinate assembly of the platform of the 30S subunit. This chain is Small ribosomal subunit protein uS8, found in Pseudomonas fluorescens (strain Pf0-1).